We begin with the raw amino-acid sequence, 405 residues long: Mitochondrial outer membrane protein SLC25A46 (405 aa).

Residues 1 to 77 (MTSRRPDSFE…PDEAQSAAPP (77 aa)) are disordered. The segment covering 22–37 (FSGGYSGRSFNNSSSS) has biased composition (low complexity). A Solcar 1 repeat occupies 80 to 171 (QLNRFAGFGI…GIISECTPLP (92 aa)). The next 6 membrane-spanning stretches (helical) occupy residues 87 to 107 (FGIG…CIVF), 151 to 171 (FVVQ…TPLP), 183 to 203 (VVGH…FYSA), 242 to 262 (LLPL…HYII), 302 to 322 (FPEL…LFPL), and 371 to 391 (MGFY…ATVL). A Solcar 2 repeat occupies 299–401 (DAYFPELMAS…QITKMIYSTL (103 aa)).

It belongs to the mitochondrial carrier (TC 2.A.29) family.

The protein resides in the mitochondrion outer membrane. Transmembrane protein of the mitochondrial outer membrane that controls mitochondrial organization. May regulate the biogenesis and dynamics of mitochondrial cristae, the inwards folds of the inner mitochondrial membrane. Could regulate mitochondrial lipid homeostasis and thereby mitochondrial fission. The protein is Mitochondrial outer membrane protein SLC25A46 (slc25a46) of Danio rerio (Zebrafish).